We begin with the raw amino-acid sequence, 1064 residues long: Probable ATP-dependent DNA helicase CHR23 (1064 aa).

One can recognise a Helicase ATP-binding domain in the interval 398 to 563; the sequence is VSLYNNDYNG…WSLLNFLLPH (166 aa). An ATP-binding site is contributed by 411–418; that stretch reads DEMGLGKT. Positions 513 to 516 match the DEAH box motif; the sequence is DEGH. Residues 699 to 866 enclose the Helicase C-terminal domain; that stretch reads LLDRLLPKLK…DRREMLEEIM (168 aa). Disordered stretches follow at residues 924–955 and 967–1064; these read AYTSETQEDKTNAKNHFGSLTGKRKRKEAVYS and MESE…SKRN. Acidic residues predominate over residues 1002–1014; sequence ESDEEKEEEEEER. A compositionally biased stretch (low complexity) spans 1048–1064; it reads SSPNSRGKGSSKGSKRN.

The protein belongs to the helicase family. In terms of tissue distribution, expressed in embryos, root apical meristem (RAM) and shoot apical meristem (SAM).

The protein localises to the nucleus. It carries out the reaction ATP + H2O = ADP + phosphate + H(+). In terms of biological role, probable chromatin-remodeling factor that is functionally redundant with CHR12 in root and shoot stem cell initiation and root apical meristem (RAM) and shoot apical meristem (SAM) maintenance. Can associate with the promoter region of WOX5. May promote seed maturation and repress initiation of germination. May repress plant growth. In Arabidopsis thaliana (Mouse-ear cress), this protein is Probable ATP-dependent DNA helicase CHR23.